The sequence spans 1115 residues: Iron-regulated protein FrpA (1115 aa).

7 Hemolysin-type calcium-binding repeats span residues 755-772 (FGHN…NDTL), 773-790 (IGGA…SDTY), 901-918 (NGGL…NDLL), 919-936 (NGDA…NDTL), 937-954 (DGGE…NDAL), 955-972 (NGGE…NDTL), and 973-990 (IGGA…SDTY).

This sequence belongs to the RTX prokaryotic toxin (TC 1.C.11) family.

The protein localises to the cell outer membrane. Its subcellular location is the secreted. Functionally, may participate in the pathogenesis of meningococcal disease. The chain is Iron-regulated protein FrpA (frpA) from Neisseria meningitidis serogroup C.